The sequence spans 414 residues: NADH kinase POS5, mitochondrial (414 aa).

Belongs to the NAD kinase family.

It localises to the mitochondrion matrix. The catalysed reaction is NADH + ATP = ADP + NADPH + H(+). Phosphorylates both NADH and NAD(+), with a twofold preference for NADH. Anti-oxidant factor and key source of the cellular reductant NADPH. The chain is NADH kinase POS5, mitochondrial (POS5) from Saccharomyces cerevisiae (strain ATCC 204508 / S288c) (Baker's yeast).